A 657-amino-acid chain; its full sequence is Folic acid synthesis protein FOL1 (657 aa).

The DHNA stretch occupies residues 1–116 (MDKIIIKDLL…WPGVQIERTL (116 aa)). The segment at 149 to 274 (YLAFGSNLGD…FVLLPLSDIA (126 aa)) is HPPK. Positions 333 to 641 (TFIMGILNVT…DIPEIRDAML (309 aa)) constitute a Pterin-binding domain. The interval 335–657 (IMGILNVTPD…KPQRRYQIQK (323 aa)) is DHPS. N340 lines the Mg(2+) pocket. (7,8-dihydropterin-6-yl)methyl diphosphate contacts are provided by T380, D416, and N435. Residues 466-524 (LNNSNDSNSNSSINTNGEDNNNNNNNNNNNNNNNNNNNNNNNNNDDNDNDNRSKIKQKI) are disordered. Over residues 467–509 (NNSNDSNSNSSINTNGEDNNNNNNNNNNNNNNNNNNNNNNNNN) the composition is skewed to low complexity. Residues 514–524 (NDNRSKIKQKI) are compositionally biased toward basic and acidic residues. (7,8-dihydropterin-6-yl)methyl diphosphate-binding positions include D547, K583, and 629-631 (RIH).

In the N-terminal section; belongs to the DHNA family. It in the central section; belongs to the HPPK family. This sequence in the C-terminal section; belongs to the DHPS family. Mg(2+) serves as cofactor.

It carries out the reaction 7,8-dihydroneopterin = 6-hydroxymethyl-7,8-dihydropterin + glycolaldehyde. It catalyses the reaction 6-hydroxymethyl-7,8-dihydropterin + ATP = (7,8-dihydropterin-6-yl)methyl diphosphate + AMP + H(+). The enzyme catalyses (7,8-dihydropterin-6-yl)methyl diphosphate + 4-aminobenzoate = 7,8-dihydropteroate + diphosphate. It participates in cofactor biosynthesis; tetrahydrofolate biosynthesis; 2-amino-4-hydroxy-6-hydroxymethyl-7,8-dihydropteridine diphosphate from 7,8-dihydroneopterin triphosphate: step 3/4. It functions in the pathway cofactor biosynthesis; tetrahydrofolate biosynthesis; 2-amino-4-hydroxy-6-hydroxymethyl-7,8-dihydropteridine diphosphate from 7,8-dihydroneopterin triphosphate: step 4/4. The protein operates within cofactor biosynthesis; tetrahydrofolate biosynthesis; 7,8-dihydrofolate from 2-amino-4-hydroxy-6-hydroxymethyl-7,8-dihydropteridine diphosphate and 4-aminobenzoate: step 1/2. Functionally, catalyzes three sequential steps of tetrahydrofolate biosynthesis. This chain is Folic acid synthesis protein FOL1 (fol1), found in Dictyostelium discoideum (Social amoeba).